The chain runs to 533 residues: GDP-fucose protein O-fucosyltransferase 4 (533 aa).

The Cytoplasmic segment spans residues 1–20; that stretch reads MSAGCTQLVWGGRLHWGASH. The helical; Signal-anchor for type II membrane protein transmembrane segment at 21 to 37 threads the bilayer; the sequence is LLSCLLALCALWVLAAA. Residues 38-533 lie on the Lumenal side of the membrane; sequence EPTEGGSANV…ETYIKRSMNH (496 aa). N-linked (GlcNAc...) asparagine glycosylation is found at Asn-148, Asn-206, and Asn-358. Cys-429 and Cys-432 are oxidised to a cystine. The N-linked (GlcNAc...) asparagine glycan is linked to Asn-511.

This sequence belongs to the glycosyltransferase 10 family.

Its subcellular location is the endoplasmic reticulum membrane. It catalyses the reaction L-threonyl-[protein] + GDP-beta-L-fucose = 3-O-(alpha-L-fucosyl)-L-threonyl-[protein] + GDP + H(+). The catalysed reaction is L-seryl-[protein] + GDP-beta-L-fucose = 3-O-(alpha-L-fucosyl)-L-seryl-[protein] + GDP + H(+). The protein operates within protein modification; protein glycosylation. Protein O-fucosyltransferase that specifically catalyzes O-fucosylation of serine or threonine residues in EMI domains of target proteins. Attaches fucose through an O-glycosidic linkage. O-fucosylation of EMI domain-containing proteins may be required for facilitating protein folding and secretion. The protein is GDP-fucose protein O-fucosyltransferase 4 (fut11) of Xenopus tropicalis (Western clawed frog).